A 240-amino-acid polypeptide reads, in one-letter code: Glutamine amidotransferase-like protein chry6 (240 aa).

In terms of domain architecture, Glutamine amidotransferase type-1 spans 13 to 205 (NFILDDTGGR…FVASDNPVLV (193 aa)). Cysteine 102 functions as the Nucleophile in the catalytic mechanism. Catalysis depends on residues histidine 185 and glutamate 187.

Belongs to the peptidase C26 family.

It participates in pigment biosynthesis. Functionally, glutamine amidotransferase-like protein; part of the gene cluster that mediates the biosynthesis of the yellow pigment chrysogine. Pyruvic acid and anthranilic acid are likely substrates for the nonribosomal peptide synthetase chry1/NRPS14, with pyruvic acid adenylated by the first A domain and anthranilic acid by the second. If pyruvic acid and anthranilic acid are merged and released from chry1/NRPS14 by hydrolysis, a subsequent amidation would lead to 2-pyruvoylaminobenzamide. This process is probably catalyzed by the amidotransferase chry2 using glutamine as amino donor. The dehydrogenase chry5 that has a terminal berberine bridge domain for C-N cyclization could catalyze the cyclization of 2-pyruvoylaminobenzamide to yield acetyl-4(3H)-quinazolidinone. A final reduction of acetyl-4(3H)-quinazolidinone catalyzed by the oxidoreductase chry4 would result in chrysogine. The sequence is that of Glutamine amidotransferase-like protein chry6 from Gibberella zeae (strain ATCC MYA-4620 / CBS 123657 / FGSC 9075 / NRRL 31084 / PH-1) (Wheat head blight fungus).